We begin with the raw amino-acid sequence, 115 residues long: ATP-dependent Clp protease adapter protein ClpS (115 aa).

The protein belongs to the ClpS family. In terms of assembly, binds to the N-terminal domain of the chaperone ClpA.

Functionally, involved in the modulation of the specificity of the ClpAP-mediated ATP-dependent protein degradation. The sequence is that of ATP-dependent Clp protease adapter protein ClpS from Leptothrix cholodnii (strain ATCC 51168 / LMG 8142 / SP-6) (Leptothrix discophora (strain SP-6)).